Here is a 193-residue protein sequence, read N- to C-terminus: Rho-related protein racF2 (193 aa).

10–17 is a GTP binding site; the sequence is GDGAVGKT. The short motif at 32-40 is the Effector region element; it reads YLPTVFDNY. GTP-binding positions include 57–61 and 115–118; these read DTAGQ and TKQD. A Cysteine methyl ester modification is found at cysteine 190. Cysteine 190 is lipidated: S-geranylgeranyl cysteine. A propeptide spans 191–193 (removed in mature form); the sequence is TIM.

This sequence belongs to the small GTPase superfamily. Rho family.

It is found in the cell membrane. The polypeptide is Rho-related protein racF2 (racF2) (Dictyostelium discoideum (Social amoeba)).